The sequence spans 150 residues: MILGIGTDLANIERIEGTLERFGDRFRNRVFTDREQARAERMPEPAAVYAKRWAAKEACSKALGTGLRMGIAWKDMSVRNLRTGQPVMEVTGWARERLDQMTPDGYGAVIHVTLTDDHPWAQAMVVIEALTPEEAELRPDLGPAARRTMS.

Positions 8 and 57 each coordinate Mg(2+).

It belongs to the P-Pant transferase superfamily. AcpS family. The cofactor is Mg(2+).

It is found in the cytoplasm. The catalysed reaction is apo-[ACP] + CoA = holo-[ACP] + adenosine 3',5'-bisphosphate + H(+). In terms of biological role, transfers the 4'-phosphopantetheine moiety from coenzyme A to a Ser of acyl-carrier-protein. The chain is Holo-[acyl-carrier-protein] synthase from Jannaschia sp. (strain CCS1).